Reading from the N-terminus, the 119-residue chain is Large ribosomal subunit protein bL20 (119 aa).

The protein belongs to the bacterial ribosomal protein bL20 family.

Functionally, binds directly to 23S ribosomal RNA and is necessary for the in vitro assembly process of the 50S ribosomal subunit. It is not involved in the protein synthesizing functions of that subunit. The polypeptide is Large ribosomal subunit protein bL20 (Nitrobacter hamburgensis (strain DSM 10229 / NCIMB 13809 / X14)).